The primary structure comprises 461 residues: Phosphoenolpyruvate carboxylase (461 aa).

This sequence belongs to the PEPCase type 2 family. As to quaternary structure, homotetramer. Requires Mg(2+) as cofactor.

The enzyme catalyses oxaloacetate + phosphate = phosphoenolpyruvate + hydrogencarbonate. Catalyzes the irreversible beta-carboxylation of phosphoenolpyruvate (PEP) to form oxaloacetate (OAA), a four-carbon dicarboxylic acid source for the tricarboxylic acid cycle. This is Phosphoenolpyruvate carboxylase from Pyrobaculum islandicum (strain DSM 4184 / JCM 9189 / GEO3).